We begin with the raw amino-acid sequence, 159 residues long: 2-C-methyl-D-erythritol 2,4-cyclodiphosphate synthase (159 aa).

2 residues coordinate a divalent metal cation: Asp-8 and His-10. Residues 8–10 (DVH) and 34–35 (HS) each bind 4-CDP-2-C-methyl-D-erythritol 2-phosphate. His-42 provides a ligand contact to a divalent metal cation. 4-CDP-2-C-methyl-D-erythritol 2-phosphate contacts are provided by residues 56-58 (DIG), 132-135 (TTTE), and Arg-142.

This sequence belongs to the IspF family. As to quaternary structure, homotrimer. It depends on a divalent metal cation as a cofactor.

It carries out the reaction 4-CDP-2-C-methyl-D-erythritol 2-phosphate = 2-C-methyl-D-erythritol 2,4-cyclic diphosphate + CMP. The protein operates within isoprenoid biosynthesis; isopentenyl diphosphate biosynthesis via DXP pathway; isopentenyl diphosphate from 1-deoxy-D-xylulose 5-phosphate: step 4/6. Its function is as follows. Involved in the biosynthesis of isopentenyl diphosphate (IPP) and dimethylallyl diphosphate (DMAPP), two major building blocks of isoprenoid compounds. Catalyzes the conversion of 4-diphosphocytidyl-2-C-methyl-D-erythritol 2-phosphate (CDP-ME2P) to 2-C-methyl-D-erythritol 2,4-cyclodiphosphate (ME-CPP) with a corresponding release of cytidine 5-monophosphate (CMP). The sequence is that of 2-C-methyl-D-erythritol 2,4-cyclodiphosphate synthase from Chlorobium phaeobacteroides (strain BS1).